The following is a 128-amino-acid chain: Ribonuclease P protein component (128 aa).

This sequence belongs to the RnpA family. In terms of assembly, consists of a catalytic RNA component (M1 or rnpB) and a protein subunit.

It carries out the reaction Endonucleolytic cleavage of RNA, removing 5'-extranucleotides from tRNA precursor.. Functionally, RNaseP catalyzes the removal of the 5'-leader sequence from pre-tRNA to produce the mature 5'-terminus. It can also cleave other RNA substrates such as 4.5S RNA. The protein component plays an auxiliary but essential role in vivo by binding to the 5'-leader sequence and broadening the substrate specificity of the ribozyme. The polypeptide is Ribonuclease P protein component (Prochlorococcus marinus (strain NATL2A)).